The following is a 334-amino-acid chain: Adenine deaminase (334 aa).

Positions 14, 16, and 194 each coordinate Zn(2+). Glu197 (proton donor) is an active-site residue. Asp275 serves as a coordination point for Zn(2+). Asp276 is a substrate binding site.

This sequence belongs to the metallo-dependent hydrolases superfamily. Adenosine and AMP deaminases family. Adenine deaminase type 2 subfamily. It depends on Zn(2+) as a cofactor.

It carries out the reaction adenine + H2O + H(+) = hypoxanthine + NH4(+). In terms of biological role, catalyzes the hydrolytic deamination of adenine to hypoxanthine. Plays an important role in the purine salvage pathway and in nitrogen catabolism. The chain is Adenine deaminase from Hahella chejuensis (strain KCTC 2396).